Reading from the N-terminus, the 253-residue chain is 23S rRNA (cytidine-2'-O)-methyltransferase TlyA (253 aa).

The 73-residue stretch at 1 to 73 folds into the S4 RNA-binding domain; sequence MRFDFFVSKR…LKLDLLSEIY (73 aa).

It belongs to the TlyA family.

The enzyme catalyses cytidine(1920) in 23S rRNA + S-adenosyl-L-methionine = 2'-O-methylcytidine(1920) in 23S rRNA + S-adenosyl-L-homocysteine + H(+). Its function is as follows. Catalyzes the 2'-O-methylation at nucleotide C1920 in 23S rRNA. Enhances motility. Enhances biofilm formation. Involved in the assembly of 70S ribosomes. Involved in virulence by promoting adherence and invasion to host cells. Involved in pathogenicity by modulating secretion of host-protective chemokine interleukin 8 (IL-8). Involved in susceptibility to antibiotic capreomycin. The chain is 23S rRNA (cytidine-2'-O)-methyltransferase TlyA from Campylobacter jejuni subsp. jejuni serotype O:23/36 (strain 81-176).